Reading from the N-terminus, the 233-residue chain is Small ribosomal subunit protein eS4 (233 aa).

Residues 37 to 99 form the S4 RNA-binding domain; the sequence is VPLVVVLRDV…RDEYYRVFPD (63 aa).

The protein belongs to the eukaryotic ribosomal protein eS4 family.

The chain is Small ribosomal subunit protein eS4 from Halobacterium salinarum (strain ATCC 29341 / DSM 671 / R1).